A 470-amino-acid polypeptide reads, in one-letter code: 3-isopropylmalate dehydratase large subunit (470 aa).

Positions 349, 409, and 412 each coordinate [4Fe-4S] cluster.

It belongs to the aconitase/IPM isomerase family. LeuC type 1 subfamily. In terms of assembly, heterodimer of LeuC and LeuD. Requires [4Fe-4S] cluster as cofactor.

The catalysed reaction is (2R,3S)-3-isopropylmalate = (2S)-2-isopropylmalate. The protein operates within amino-acid biosynthesis; L-leucine biosynthesis; L-leucine from 3-methyl-2-oxobutanoate: step 2/4. Its function is as follows. Catalyzes the isomerization between 2-isopropylmalate and 3-isopropylmalate, via the formation of 2-isopropylmaleate. In Methylobacterium radiotolerans (strain ATCC 27329 / DSM 1819 / JCM 2831 / NBRC 15690 / NCIMB 10815 / 0-1), this protein is 3-isopropylmalate dehydratase large subunit.